The sequence spans 217 residues: Homologous-pairing protein 2 homolog (217 aa).

The segment at L89–L117 is interaction with NR3C1, homodimerization and transcriptional activation almost abolished when missing. Positions I93–H153 form a coiled coil. The tract at residues T118–E182 is DNA-binding. An interaction with NR3C1 decreased when missing region spans residues T118–E182.

The protein belongs to the HOP2 family. As to quaternary structure, forms a stable heterodimer with MND1. Interacts with PSMC3/TBP1. Interacts with the DNA-binding domain of the nuclear receptors NR3C1/GR, ESR2/ER-beta, THRB and RXRA. In terms of processing, phosphorylated by PKA, PKC and MAPK.

It is found in the nucleus. Functionally, plays an important role in meiotic recombination. Stimulates DMC1-mediated strand exchange required for pairing homologous chromosomes during meiosis. The complex PSMC3IP/MND1 binds DNA, stimulates the recombinase activity of DMC1 as well as DMC1 D-loop formation from double-strand DNA. This complex stabilizes presynaptic RAD51 and DMC1 filaments formed on single strand DNA to capture double-strand DNA. This complex stimulates both synaptic and presynaptic critical steps in RAD51 and DMC1-promoted homologous pairing. May inhibit HIV-1 viral protein TAT activity and modulate the activity of proteasomes through association with PSMC3. Plays a role as a coactivator in nuclear receptor-mediated transcription. The sequence is that of Homologous-pairing protein 2 homolog (Psmc3ip) from Rattus norvegicus (Rat).